A 553-amino-acid chain; its full sequence is Dihydroxy-acid dehydratase (553 aa).

Asp-78 serves as a coordination point for Mg(2+). Cys-119 contacts [2Fe-2S] cluster. Asp-120 and Lys-121 together coordinate Mg(2+). Lys-121 is modified (N6-carboxylysine). Cys-193 provides a ligand contact to [2Fe-2S] cluster. Glu-441 contacts Mg(2+). Ser-467 acts as the Proton acceptor in catalysis.

This sequence belongs to the IlvD/Edd family. As to quaternary structure, homodimer. The cofactor is [2Fe-2S] cluster. Requires Mg(2+) as cofactor.

It catalyses the reaction (2R)-2,3-dihydroxy-3-methylbutanoate = 3-methyl-2-oxobutanoate + H2O. The catalysed reaction is (2R,3R)-2,3-dihydroxy-3-methylpentanoate = (S)-3-methyl-2-oxopentanoate + H2O. The protein operates within amino-acid biosynthesis; L-isoleucine biosynthesis; L-isoleucine from 2-oxobutanoate: step 3/4. It functions in the pathway amino-acid biosynthesis; L-valine biosynthesis; L-valine from pyruvate: step 3/4. Its function is as follows. Functions in the biosynthesis of branched-chain amino acids. Catalyzes the dehydration of (2R,3R)-2,3-dihydroxy-3-methylpentanoate (2,3-dihydroxy-3-methylvalerate) into 2-oxo-3-methylpentanoate (2-oxo-3-methylvalerate) and of (2R)-2,3-dihydroxy-3-methylbutanoate (2,3-dihydroxyisovalerate) into 2-oxo-3-methylbutanoate (2-oxoisovalerate), the penultimate precursor to L-isoleucine and L-valine, respectively. The polypeptide is Dihydroxy-acid dehydratase (Pelobacter propionicus (strain DSM 2379 / NBRC 103807 / OttBd1)).